A 578-amino-acid chain; its full sequence is Probable cytochrome c oxidase subunit 1-alpha (578 aa).

The segment at 1–21 (MSILNEPQGASAAEDSYENEL) is disordered. Residues 44–64 (IGTMYLVTSFAFFVIGGVMAL) form a helical membrane-spanning segment. A Fe(II)-heme a-binding site is contributed by H90. A run of 6 helical transmembrane segments spans residues 93 to 113 (IMLL…IMPL), 125 to 145 (LNMF…GGFL), 174 to 194 (LWIM…VNFI), 217 to 237 (VLLT…ALFA), 262 to 282 (LFWF…FGIV), and 294 to 314 (IFGY…SVTV). Positions 268 and 272 each coordinate Cu cation. A cross-link (1'-histidyl-3'-tyrosine (His-Tyr)) is located at residues 268-272 (HPEVY). Cu cation-binding residues include H317 and H318. A run of 2 helical transmembrane segments spans residues 319–339 (MYVT…LIAV) and 363–383 (MLWS…GVIL). Position 401 (H401) interacts with heme a3. 3 helical membrane-spanning segments follow: residues 402-422 (FHYV…HFWW), 437-457 (ITFW…HWLG), and 480-500 (ISTI…YNIW). H403 contacts Fe(II)-heme a.

It belongs to the heme-copper respiratory oxidase family. In terms of assembly, associates with subunits II, III and IV to form cytochrome c oxidase. Cu(2+) is required as a cofactor. Requires heme as cofactor.

Its subcellular location is the cell membrane. The catalysed reaction is 4 Fe(II)-[cytochrome c] + O2 + 8 H(+)(in) = 4 Fe(III)-[cytochrome c] + 2 H2O + 4 H(+)(out). It participates in energy metabolism; oxidative phosphorylation. Its function is as follows. Cytochrome c oxidase is the component of the respiratory chain that catalyzes the reduction of oxygen to water. Subunits 1-3 form the functional core of the enzyme complex. CO I is the catalytic subunit of the enzyme. Electrons originating in cytochrome c are transferred via the copper A center of subunit 2 and heme A of subunit 1 to the bimetallic center formed by heme A3 and copper B. This is Probable cytochrome c oxidase subunit 1-alpha (ctaD1) from Streptomyces coelicolor (strain ATCC BAA-471 / A3(2) / M145).